A 217-amino-acid chain; its full sequence is MNKLYSLFLFLFIQLSIKYYNAKVTVDTVCKKGFLIQMSGHLECKCENDLVLVNEETCEEKVLKCDETTVNKPCGDFSKCIKIDGSPISYACKCNPGYDMVNNVCILNECKNVTCGNGKCILDTSNPVKTGVCSCNIGKVPNADDKNKCSKDGETKCSLKCLKENETCKAVDGIYKCDCKDGFIMDNESSTCTAFSVYNILNLSLIFVLFSVCFFIM.

The first 16 residues, 1–16 (MNKLYSLFLFLFIQLS), serve as a signal peptide directing secretion. The 30-residue stretch at 30–59 (CKKGFLIQMSGHLECKCENDLVLVNEETCE) folds into the EGF-like 1; truncated domain. EGF-like domains are found at residues 61–106 (KVLK…NVCI), 106–150 (ILNE…NKCS), and 153–193 (GETK…STCT). 9 disulfides stabilise this stretch: Cys65/Cys80, Cys74/Cys92, Cys94/Cys105, Cys110/Cys120, Cys115/Cys133, Cys135/Cys149, Cys157/Cys168, Cys161/Cys177, and Cys179/Cys192. N-linked (GlcNAc...) asparagine glycosylation is present at Asn112. Asn165 and Asn187 each carry an N-linked (GlcNAc...) asparagine glycan. Residue Ser196 is the site of GPI-anchor amidated serine attachment. Residues 197-217 (VYNILNLSLIFVLFSVCFFIM) constitute a propeptide, removed in mature form. A glycan (N-linked (GlcNAc...) asparagine) is linked at Asn202.

It is found in the cell membrane. The protein is 25 kDa ookinete surface antigen of Plasmodium reichenowi.